Reading from the N-terminus, the 239-residue chain is Endoglucanase A (239 aa).

Residues 1–16 (MKLSMTLSLFAATAMG) form the signal peptide.

Belongs to the glycosyl hydrolase 12 (cellulase H) family.

It carries out the reaction Endohydrolysis of (1-&gt;4)-beta-D-glucosidic linkages in cellulose, lichenin and cereal beta-D-glucans.. Has carboxylmethylcellulase activity. The polypeptide is Endoglucanase A (cekA) (Aspergillus kawachii (strain NBRC 4308) (White koji mold)).